We begin with the raw amino-acid sequence, 445 residues long: Histidinol dehydrogenase (445 aa).

NAD(+) is bound by residues Y136, Q200, and N228. The substrate site is built by T251, Q273, and H276. Residues Q273 and H276 each contribute to the Zn(2+) site. Catalysis depends on proton acceptor residues E342 and H343. Substrate is bound by residues H343, D376, E430, and H435. D376 serves as a coordination point for Zn(2+). H435 is a binding site for Zn(2+).

Belongs to the histidinol dehydrogenase family. The cofactor is Zn(2+).

The catalysed reaction is L-histidinol + 2 NAD(+) + H2O = L-histidine + 2 NADH + 3 H(+). It functions in the pathway amino-acid biosynthesis; L-histidine biosynthesis; L-histidine from 5-phospho-alpha-D-ribose 1-diphosphate: step 9/9. Functionally, catalyzes the sequential NAD-dependent oxidations of L-histidinol to L-histidinaldehyde and then to L-histidine. This Mycolicibacterium smegmatis (Mycobacterium smegmatis) protein is Histidinol dehydrogenase (hisD).